The chain runs to 48 residues: Cytochrome b559 subunit beta (48 aa).

The helical transmembrane segment at 23 to 39 (WLAVHALAIPTVFFLGA) threads the bilayer. His27 provides a ligand contact to heme.

The protein belongs to the PsbE/PsbF family. Heterodimer of an alpha subunit and a beta subunit. PSII is composed of 1 copy each of membrane proteins PsbA, PsbB, PsbC, PsbD, PsbE, PsbF, PsbH, PsbI, PsbJ, PsbK, PsbL, PsbM, PsbT, PsbX, PsbY, Psb30/Ycf12, peripheral proteins PsbO, CyanoQ (PsbQ), PsbU, PsbV and a large number of cofactors. It forms dimeric complexes. Requires heme b as cofactor.

Its subcellular location is the cellular thylakoid membrane. Functionally, this b-type cytochrome is tightly associated with the reaction center of photosystem II (PSII). PSII is a light-driven water:plastoquinone oxidoreductase that uses light energy to abstract electrons from H(2)O, generating O(2) and a proton gradient subsequently used for ATP formation. It consists of a core antenna complex that captures photons, and an electron transfer chain that converts photonic excitation into a charge separation. In Prochlorococcus marinus (strain SARG / CCMP1375 / SS120), this protein is Cytochrome b559 subunit beta.